Consider the following 267-residue polypeptide: Phosphatidylserine decarboxylase proenzyme (267 aa).

Catalysis depends on charge relay system; for autoendoproteolytic cleavage activity residues Asp-78, His-132, and Ser-236. Catalysis depends on Ser-236, which acts as the Schiff-base intermediate with substrate; via pyruvic acid; for decarboxylase activity. Ser-236 carries the post-translational modification Pyruvic acid (Ser); by autocatalysis.

The protein belongs to the phosphatidylserine decarboxylase family. PSD-B subfamily. Prokaryotic type I sub-subfamily. As to quaternary structure, heterodimer of a large membrane-associated beta subunit and a small pyruvoyl-containing alpha subunit. It depends on pyruvate as a cofactor. In terms of processing, is synthesized initially as an inactive proenzyme. Formation of the active enzyme involves a self-maturation process in which the active site pyruvoyl group is generated from an internal serine residue via an autocatalytic post-translational modification. Two non-identical subunits are generated from the proenzyme in this reaction, and the pyruvate is formed at the N-terminus of the alpha chain, which is derived from the carboxyl end of the proenzyme. The autoendoproteolytic cleavage occurs by a canonical serine protease mechanism, in which the side chain hydroxyl group of the serine supplies its oxygen atom to form the C-terminus of the beta chain, while the remainder of the serine residue undergoes an oxidative deamination to produce ammonia and the pyruvoyl prosthetic group on the alpha chain. During this reaction, the Ser that is part of the protease active site of the proenzyme becomes the pyruvoyl prosthetic group, which constitutes an essential element of the active site of the mature decarboxylase.

It localises to the cell membrane. It catalyses the reaction a 1,2-diacyl-sn-glycero-3-phospho-L-serine + H(+) = a 1,2-diacyl-sn-glycero-3-phosphoethanolamine + CO2. It functions in the pathway phospholipid metabolism; phosphatidylethanolamine biosynthesis; phosphatidylethanolamine from CDP-diacylglycerol: step 2/2. Catalyzes the formation of phosphatidylethanolamine (PtdEtn) from phosphatidylserine (PtdSer). This chain is Phosphatidylserine decarboxylase proenzyme, found in Helicobacter pylori (strain J99 / ATCC 700824) (Campylobacter pylori J99).